A 425-amino-acid polypeptide reads, in one-letter code: Probable threonylcarbamoyladenosine tRNA methylthiotransferase (425 aa).

Residues 2 to 110 (VKIYIENYGC…IIQAVEYALR (109 aa)) form the MTTase N-terminal domain. Residues Cys11, Cys47, Cys76, Cys148, Cys152, and Cys155 each contribute to the [4Fe-4S] cluster site. Positions 133 to 363 (LSPRTVYFIV…HRIRLQISYE (231 aa)) constitute a Radical SAM core domain. The 60-residue stretch at 366 to 425 (QKYIGKKVEVLIHGEGKKGNVDAVTMNYKHVILPFGNSGEFRIAEIKNATSTYLLGEVMS) folds into the TRAM domain.

The protein belongs to the methylthiotransferase family. CDKAL1 subfamily. The cofactor is [4Fe-4S] cluster.

The catalysed reaction is N(6)-L-threonylcarbamoyladenosine(37) in tRNA + (sulfur carrier)-SH + AH2 + 2 S-adenosyl-L-methionine = 2-methylsulfanyl-N(6)-L-threonylcarbamoyladenosine(37) in tRNA + (sulfur carrier)-H + 5'-deoxyadenosine + L-methionine + A + S-adenosyl-L-homocysteine + 2 H(+). Catalyzes the methylthiolation of N6-threonylcarbamoyladenosine (t(6)A), leading to the formation of 2-methylthio-N6-threonylcarbamoyladenosine (ms(2)t(6)A) at position 37 in tRNAs that read codons beginning with adenine. The sequence is that of Probable threonylcarbamoyladenosine tRNA methylthiotransferase from Pyrococcus abyssi (strain GE5 / Orsay).